The sequence spans 37 residues: Large ribosomal subunit protein bL36 (37 aa).

The protein belongs to the bacterial ribosomal protein bL36 family.

In Dechloromonas aromatica (strain RCB), this protein is Large ribosomal subunit protein bL36.